An 863-amino-acid polypeptide reads, in one-letter code: Paramyosin (863 aa).

The nonhelical region stretch occupies residues 1 to 18 (MSESHVKISRTIIRGTSP). Residues 19 to 836 (STVRLESRVR…ERTITIKRTI (818 aa)) adopt a coiled-coil conformation. A nonhelical region region spans residues 837-863 (GGPGSRAVSVVREINSVSRGNRATSIM).

Belongs to the paramyosin family. Homodimer or monomer in secreted form.

The protein localises to the cytoplasm. Its subcellular location is the myofibril. It localises to the secreted. Its function is as follows. Paramyosin is a major structural component of many thick filaments isolated from invertebrate muscles. It is a prominent antigen in human cysticercosis, may have a role as a modulator of the host immune response. It is able to bind collagen and has complement inhibitor activity. The sequence is that of Paramyosin (PMY) from Taenia solium (Pork tapeworm).